Reading from the N-terminus, the 128-residue chain is MPFTASAQPRKQRLSLYAAPLHLRRKLLNAKLSPELQKKLGVKRLPVRRGDTVLIMRGDFKGVTGKVVKVDLKRVRIFVEGATRTNSRGQTVYYPIHPSKVMIVDVDLSDKARQKLIERRKRGQHGSS.

It belongs to the universal ribosomal protein uL24 family. Part of the 50S ribosomal subunit.

In terms of biological role, one of two assembly initiator proteins, it binds directly to the 5'-end of the 23S rRNA, where it nucleates assembly of the 50S subunit. Located at the polypeptide exit tunnel on the outside of the subunit. This is Large ribosomal subunit protein uL24 from Pyrobaculum calidifontis (strain DSM 21063 / JCM 11548 / VA1).